Consider the following 260-residue polypeptide: Vesicle-associated membrane protein/synaptobrevin-binding protein (260 aa).

Residues 1–238 (MASHEQALIL…SPAPAAAVRA (238 aa)) lie on the Cytoplasmic side of the membrane. In terms of domain architecture, MSP spans 7-125 (ALILEPAGEL…MDTKLRCVFE (119 aa)). The segment at 127 to 177 (PDGSHQAPASDASRATDAGAHFSESALEDPTVASRKTETQSPKRVGAVGSA) is disordered. The stretch at 172-216 (GAVGSAGEDVKKLQHELKKAQSEITSLKGENSQLKDEGIRLRKVA) forms a coiled coil. A helical; Anchor for type IV membrane protein transmembrane segment spans residues 239 to 259 (FPPVVYVVAAIILGLIIGKFL).

This sequence belongs to the VAMP-associated protein (VAP) (TC 9.B.17) family. Detected only in the central nervous system and the gill of aplysia.

The protein localises to the membrane. The protein resides in the synapse. It is found in the synaptosome. Its function is as follows. Required for neurotransmitter release. Interacts with VAMP. This Aplysia californica (California sea hare) protein is Vesicle-associated membrane protein/synaptobrevin-binding protein.